The following is a 554-amino-acid chain: MQTDIAIAQSAEILPITQIAEKAGLKPNEILPYGYDKAKIKLDPTISRKKDLGKLILVTSINPTPAGEGKSTVTVGLADALALAGKKTMIALREPSLGPVMGMKGGATGGGMSQVIPMADINLHFTGDFHALTAAHDTLAAVVDNSLQQGNPLNIDPRRIIWKRVLDINDRALRHITIGMGGPTSGVPREDGFDITVASELMAILTLSTDLMDLKARVARIVVGYTYDKVPVTVADLGVSGALAVLLKDAIMPNLVQTLAHTPAIIHGGPFANIAQGTNSILATKTALQLADYTVTEGGFGADLGGEKFLDVKVPILGKTPDTIVVVATVRALKHHGGVALADLNNENLTALAAGLENLGQHLKAMGRYGVPVVVAINRFSADTDSEIQAIKDYAQAFGAAAYTTTVWAEGGAGAQDLAAAVIEAADQEADYTPLYQPENEAIDKLNAIVTTIYGGLGVELSATAQKQLMAFKAQGWDKLPIIMAKTQYSFSDDPKRLGAPKDFVIHVREFVPKLGAGFLVAMTGSILTMPGLPKHPAALDIDIDETGKITGLF.

64 to 71 is an ATP binding site; the sequence is TPAGEGKS.

This sequence belongs to the formate--tetrahydrofolate ligase family.

The catalysed reaction is (6S)-5,6,7,8-tetrahydrofolate + formate + ATP = (6R)-10-formyltetrahydrofolate + ADP + phosphate. The protein operates within one-carbon metabolism; tetrahydrofolate interconversion. The polypeptide is Formate--tetrahydrofolate ligase (Leuconostoc citreum (strain KM20)).